Consider the following 457-residue polypeptide: MSKRYAVVLAAGQGTRMKSKLYKVLHPVCGKPMVEHVVDQISTLNVDKVVTIVGHGAEKVQEHLAGKSEFVKQEEQLGTAHAVLQAKAELAGKDGVTLVVCGDTPLIEASTMEALLKYHHEKRAKATILTTVIEDPTGYGRIIRDDLGIVEKIVEHKDATEKEQRISEINTGTYCFDNKALFEALENVSNDNVQGEYYLPDVIKILKDSDEVVAAYRMESFEESLGVNDRIALAEASRLMQRRINENHMRNGVTLVNPENTYIDIDVKIGQDTVIEPGVMLRGETVIGDDCVVTSGSEIVNSVIGERVHVRTSSIFESKVGDDVQIGPYAHLRPESDIHDHVKIGNYVETKKAVVGEGTKLPHFIYMGDAEIGKNVNVGCGSIAVNYDGKNKAKTIIGDNVFVGCNSNLIAPVKVGDRAFIAAGSTITKDVPDDALGIARAKQDNKLGYAKHLNHGK.

Residues 1-230 (MSKRYAVVLA…FEESLGVNDR (230 aa)) form a pyrophosphorylase region. UDP-N-acetyl-alpha-D-glucosamine is bound by residues 9 to 12 (LAAG), Lys-23, Gln-73, and 78 to 79 (GT). Residue Asp-103 participates in Mg(2+) binding. Residues Gly-140, Glu-155, Asn-170, and Asn-228 each coordinate UDP-N-acetyl-alpha-D-glucosamine. Asn-228 is a binding site for Mg(2+). A linker region spans residues 231–251 (IALAEASRLMQRRINENHMRN). The N-acetyltransferase stretch occupies residues 252-457 (GVTLVNPENT…GYAKHLNHGK (206 aa)). Positions 333 and 351 each coordinate UDP-N-acetyl-alpha-D-glucosamine. The Proton acceptor role is filled by His-363. Tyr-366 and Asn-377 together coordinate UDP-N-acetyl-alpha-D-glucosamine. Residues 386-387 (NY), Ala-423, and Arg-440 each bind acetyl-CoA.

It in the N-terminal section; belongs to the N-acetylglucosamine-1-phosphate uridyltransferase family. The protein in the C-terminal section; belongs to the transferase hexapeptide repeat family. Homotrimer. It depends on Mg(2+) as a cofactor.

The protein resides in the cytoplasm. It catalyses the reaction alpha-D-glucosamine 1-phosphate + acetyl-CoA = N-acetyl-alpha-D-glucosamine 1-phosphate + CoA + H(+). It carries out the reaction N-acetyl-alpha-D-glucosamine 1-phosphate + UTP + H(+) = UDP-N-acetyl-alpha-D-glucosamine + diphosphate. Its pathway is nucleotide-sugar biosynthesis; UDP-N-acetyl-alpha-D-glucosamine biosynthesis; N-acetyl-alpha-D-glucosamine 1-phosphate from alpha-D-glucosamine 6-phosphate (route II): step 2/2. It participates in nucleotide-sugar biosynthesis; UDP-N-acetyl-alpha-D-glucosamine biosynthesis; UDP-N-acetyl-alpha-D-glucosamine from N-acetyl-alpha-D-glucosamine 1-phosphate: step 1/1. It functions in the pathway bacterial outer membrane biogenesis; LPS lipid A biosynthesis. Functionally, catalyzes the last two sequential reactions in the de novo biosynthetic pathway for UDP-N-acetylglucosamine (UDP-GlcNAc). The C-terminal domain catalyzes the transfer of acetyl group from acetyl coenzyme A to glucosamine-1-phosphate (GlcN-1-P) to produce N-acetylglucosamine-1-phosphate (GlcNAc-1-P), which is converted into UDP-GlcNAc by the transfer of uridine 5-monophosphate (from uridine 5-triphosphate), a reaction catalyzed by the N-terminal domain. This chain is Bifunctional protein GlmU, found in Listeria monocytogenes serotype 4b (strain F2365).